Here is a 202-residue protein sequence, read N- to C-terminus: Syndecan-4 (202 aa).

The signal sequence occupies residues 1–22 (MASPRLLALLLLLVGAFNAAAA). Topologically, residues 23 to 152 (ESIRETEVIN…NIFERTEVLS (130 aa)) are extracellular. 2 disordered regions span residues 41 to 75 (YFSGDLPDDEDVGGPGQEPDDFEWSGSGDLEGPED) and 87 to 112 (VPLDNHIPERTGPGGRVPTEPKELEE). An O-linked (Xyl...) (glycosaminoglycan) serine glycan is attached at Ser43. Acidic residues predominate over residues 46-63 (LPDDEDVGGPGQEPDDFE). O-linked (Xyl...) (glycosaminoglycan) serine glycans are attached at residues Ser65 and Ser67. The chain crosses the membrane as a helical span at residues 153–173 (ALIVGGIVGILFAVFLVLLLV). Over 174–202 (YRMKKKDEGSYDLGKKPIYKKAPTNEFYA) the chain is Cytoplasmic.

This sequence belongs to the syndecan proteoglycan family. Homodimer. Interacts with CDCP1 and SDCBP. Interacts (via its cytoplasmic domain) with GIPC (via its PDZ domain). Interacts (via its cytoplasmic domain) with NUDT16L1. Interacts with DNM2; this interaction is markedly enhanced at focal ahesion site upon induction of focal adhesions and stress-fiber formation. Shedding, cleavage of the extracellular domain to release a soluble form, is enhanced by a number of factors such as heparanase, growth factor receptor action for example by thrombin or EGF. Physiological events such as stress or wound healing can activate the shedding. PMA-mediated shedding is inhibited by TIMP3. In terms of processing, O-glycosylated; contains both chondroitin sulfate and heparan sulfate. Ser-43, Ser-65 and Ser-67 can all be modified by either chondroitin sulfate or heparan sulfate, and the protein exists in forms that contain only chondroitin sulfate, only heparan sulfate and both chondroitin sulfate and heparan sulfate.

It localises to the membrane. The protein resides in the secreted. Functionally, cell surface proteoglycan which regulates exosome biogenesis in concert with SDCBP and PDCD6IP. The sequence is that of Syndecan-4 from Sus scrofa (Pig).